The sequence spans 130 residues: Small ribosomal subunit protein uS8 (130 aa).

The protein belongs to the universal ribosomal protein uS8 family. In terms of assembly, part of the 30S ribosomal subunit. Contacts proteins S5 and S12.

Its function is as follows. One of the primary rRNA binding proteins, it binds directly to 16S rRNA central domain where it helps coordinate assembly of the platform of the 30S subunit. This Coxiella burnetii (strain Dugway 5J108-111) protein is Small ribosomal subunit protein uS8.